We begin with the raw amino-acid sequence, 111 residues long: Nucleoid-associated protein Cpha266_1171 (111 aa).

This sequence belongs to the YbaB/EbfC family. Homodimer.

The protein localises to the cytoplasm. It localises to the nucleoid. Functionally, binds to DNA and alters its conformation. May be involved in regulation of gene expression, nucleoid organization and DNA protection. This chain is Nucleoid-associated protein Cpha266_1171, found in Chlorobium phaeobacteroides (strain DSM 266 / SMG 266 / 2430).